Here is a 210-residue protein sequence, read N- to C-terminus: Putative odorant-binding protein A5 (210 aa).

Residues 1–19 form the signal peptide; it reads MKLPALHLLFLGFICLARS.

The protein belongs to the phosphatidylethanolamine-binding protein family. In terms of tissue distribution, cells at the bases of a few scattered sensilla on the posterior surface of the antenna.

The protein localises to the secreted. This chain is Putative odorant-binding protein A5 (a5), found in Drosophila melanogaster (Fruit fly).